We begin with the raw amino-acid sequence, 389 residues long: Sedoheptulose-1,7-bisphosphatase, chloroplastic (389 aa).

An intrachain disulfide couples C115 to C120. 5 residues coordinate Mg(2+): D126, E155, D173, L175, and D176. Substrate contacts are provided by residues D176–S179, Y287, and K317. Residue E323 coordinates Mg(2+).

Belongs to the FBPase class 1 family. In terms of assembly, homodimer. Mg(2+) serves as cofactor.

It localises to the plastid. The protein localises to the chloroplast. The catalysed reaction is D-sedoheptulose 1,7-bisphosphate + H2O = D-sedoheptulose 7-phosphate + phosphate. It participates in carbohydrate biosynthesis; Calvin cycle. The protein is Sedoheptulose-1,7-bisphosphatase, chloroplastic (CSBP) of Chlamydomonas reinhardtii (Chlamydomonas smithii).